The chain runs to 214 residues: Proteasome subunit beta type-6 (214 aa).

Positions 1–14 (MEAPEWLDNAVDLG) are cleaved as a propeptide — removed in mature form. The active-site Nucleophile is the Thr-15.

This sequence belongs to the peptidase T1B family. In terms of assembly, the 26S proteasome consists of a 20S proteasome core and two 19S regulatory subunits. The 20S proteasome core is composed of 28 subunits that are arranged in four stacked rings, resulting in a barrel-shaped structure. The two end rings are each formed by seven alpha subunits, and the two central rings are each formed by seven beta subunits. The catalytic chamber with the active sites is on the inside of the barrel.

The protein localises to the cytoplasm. The protein resides in the nucleus. It catalyses the reaction Cleavage of peptide bonds with very broad specificity.. Functionally, the proteasome is a multicatalytic proteinase complex which is characterized by its ability to cleave peptides with Arg, Phe, Tyr, Leu, and Glu adjacent to the leaving group at neutral or slightly basic pH. The proteasome has an ATP-dependent proteolytic activity. The protein is Proteasome subunit beta type-6 (psmB6) of Dictyostelium discoideum (Social amoeba).